A 320-amino-acid polypeptide reads, in one-letter code: Formimidoylglutamase (320 aa).

The Mn(2+) site is built by H125, D153, H155, D157, D244, and D246.

This sequence belongs to the arginase family. Mn(2+) serves as cofactor.

The enzyme catalyses N-formimidoyl-L-glutamate + H2O = formamide + L-glutamate. Its pathway is amino-acid degradation; L-histidine degradation into L-glutamate; L-glutamate from N-formimidoyl-L-glutamate (hydrolase route): step 1/1. Catalyzes the conversion of N-formimidoyl-L-glutamate to L-glutamate and formamide. The polypeptide is Formimidoylglutamase (Rhodococcus opacus (strain B4)).